Here is a 451-residue protein sequence, read N- to C-terminus: Phosphoglucosamine mutase (451 aa).

The active-site Phosphoserine intermediate is Ser-101. The Mg(2+) site is built by Ser-101, Asp-240, Asp-242, and Asp-244. A Phosphoserine modification is found at Ser-101.

The protein belongs to the phosphohexose mutase family. Mg(2+) serves as cofactor. Post-translationally, activated by phosphorylation.

It catalyses the reaction alpha-D-glucosamine 1-phosphate = D-glucosamine 6-phosphate. Functionally, catalyzes the conversion of glucosamine-6-phosphate to glucosamine-1-phosphate. The sequence is that of Phosphoglucosamine mutase from Nitrosococcus oceani (strain ATCC 19707 / BCRC 17464 / JCM 30415 / NCIMB 11848 / C-107).